A 689-amino-acid polypeptide reads, in one-letter code: Glycine--tRNA ligase beta subunit (689 aa).

The protein belongs to the class-II aminoacyl-tRNA synthetase family. Tetramer of two alpha and two beta subunits.

Its subcellular location is the cytoplasm. The catalysed reaction is tRNA(Gly) + glycine + ATP = glycyl-tRNA(Gly) + AMP + diphosphate. In Klebsiella pneumoniae subsp. pneumoniae (strain ATCC 700721 / MGH 78578), this protein is Glycine--tRNA ligase beta subunit.